A 515-amino-acid polypeptide reads, in one-letter code: Cell division control protein 6 homolog (515 aa).

Residues 1–24 (MPTLRSATASASTAGTASPTAIAT) show a composition bias toward low complexity. The tract at residues 1–70 (MPTLRSATAS…TPKLLSASPR (70 aa)) is disordered. Positions 43 to 52 (DASQFTSPHK) are enriched in polar residues.

The protein belongs to the CDC6/cdc18 family.

The protein localises to the nucleus. Functionally, may be involved in the initiation of DNA replication. The polypeptide is Cell division control protein 6 homolog (Oryza sativa subsp. japonica (Rice)).